Here is a 441-residue protein sequence, read N- to C-terminus: GTPase Der (441 aa).

2 EngA-type G domains span residues His2–Asp164 and Ile173–Gln343. GTP is bound by residues Gly8–Ser15, Asp55–Leu59, Asn116–Asp119, Gly179–Ser186, Asp226–Ile230, and Asn288–Asp291.

The protein belongs to the TRAFAC class TrmE-Era-EngA-EngB-Septin-like GTPase superfamily. EngA (Der) GTPase family. As to quaternary structure, associates with the 50S ribosomal subunit.

In terms of biological role, GTPase that plays an essential role in the late steps of ribosome biogenesis. The polypeptide is GTPase Der (Deinococcus deserti (strain DSM 17065 / CIP 109153 / LMG 22923 / VCD115)).